The following is a 715-amino-acid chain: Coiled-coil domain-containing protein 13 (715 aa).

Coiled-coil stretches lie at residues 16–105 (KAMQ…KERD) and 134–458 (ATKI…NVHY). Positions 20–65 (EMQHKRLQKQMEKKREKELSLKSRADDQEEPLEVSDGLSLLHAGEP) are disordered. The segment covering 28 to 45 (KQMEKKREKELSLKSRAD) has biased composition (basic and acidic residues). Residues serine 258, serine 469, and serine 536 each carry the phosphoserine modification. Disordered regions lie at residues 482–541 (EDPG…EQKG) and 607–645 (LEPG…DPSF). Residues 554–608 (QAAEVERDRLTEFVTVLQKRVEESNSKLLESERKLQEERHRTVVLEQHLEKIRLE) adopt a coiled-coil conformation. Residues 625 to 637 (GLPTSNNRHNPTG) show a composition bias toward polar residues. Positions 653-683 (VESQMEELTTRLAIQVEENEMLKAALGSALR) form a coiled coil.

In terms of assembly, interacts with PCM1, CEP290 and PCNT.

It is found in the cytoplasm. The protein resides in the cytoskeleton. The protein localises to the microtubule organizing center. Its subcellular location is the centrosome. It localises to the centriolar satellite. It is found in the cilium basal body. Functionally, required for primary cilia formation and promotes the localization of the ciliopathy protein BBS4 to both centriolar satellites and cilia. This is Coiled-coil domain-containing protein 13 from Homo sapiens (Human).